The chain runs to 322 residues: uncharacterized protein (322 aa).

A signal peptide spans 1 to 27; it reads MKRLFWNLKHKKAWLVLLLGTGMILSS. Residue Cys28 is the site of N-palmitoyl cysteine attachment. Cys28 is lipidated: S-diacylglycerol cysteine. Over residues 235 to 254 the composition is skewed to polar residues; sequence DNSTNPNAPGSGQGDSTPPA. Residues 235-298 form a disordered region; the sequence is DNSTNPNAPG…AVQRSQKSYG (64 aa). A compositionally biased stretch (gly residues) spans 257–267; sequence GEGGGSDGSSG. Positions 274–296 are enriched in polar residues; the sequence is NGQNTTPTSPQSSQPAVQRSQKS.

It localises to the cell membrane. This is an uncharacterized protein from Mycoplasma genitalium (strain ATCC 33530 / DSM 19775 / NCTC 10195 / G37) (Mycoplasmoides genitalium).